We begin with the raw amino-acid sequence, 137 residues long: Peptide methionine sulfoxide reductase MsrB (137 aa).

Residues 7 to 129 enclose the MsrB domain; sequence AEELKKKLSE…NSASLAFSDE (123 aa). Zn(2+)-binding residues include C46, C49, C95, and C98. C118 (nucleophile) is an active-site residue.

Belongs to the MsrB Met sulfoxide reductase family. It depends on Zn(2+) as a cofactor.

The enzyme catalyses L-methionyl-[protein] + [thioredoxin]-disulfide + H2O = L-methionyl-(R)-S-oxide-[protein] + [thioredoxin]-dithiol. The sequence is that of Peptide methionine sulfoxide reductase MsrB from Salmonella agona (strain SL483).